Reading from the N-terminus, the 445-residue chain is Exodeoxyribonuclease 7 large subunit (445 aa).

The protein belongs to the XseA family. Heterooligomer composed of large and small subunits.

Its subcellular location is the cytoplasm. The catalysed reaction is Exonucleolytic cleavage in either 5'- to 3'- or 3'- to 5'-direction to yield nucleoside 5'-phosphates.. Its function is as follows. Bidirectionally degrades single-stranded DNA into large acid-insoluble oligonucleotides, which are then degraded further into small acid-soluble oligonucleotides. The chain is Exodeoxyribonuclease 7 large subunit from Geotalea daltonii (strain DSM 22248 / JCM 15807 / FRC-32) (Geobacter daltonii).